The sequence spans 372 residues: Spermidine/putrescine import ATP-binding protein PotA (372 aa).

One can recognise an ABC transporter domain in the interval 11–241; sequence IELRSITKSY…PANLFVARFI (231 aa). 43–50 is an ATP binding site; it reads GPSGCGKT.

Belongs to the ABC transporter superfamily. Spermidine/putrescine importer (TC 3.A.1.11.1) family. As to quaternary structure, the complex is composed of two ATP-binding proteins (PotA), two transmembrane proteins (PotB and PotC) and a solute-binding protein (PotD).

Its subcellular location is the cell inner membrane. The enzyme catalyses ATP + H2O + polyamine-[polyamine-binding protein]Side 1 = ADP + phosphate + polyamineSide 2 + [polyamine-binding protein]Side 1.. Part of the ABC transporter complex PotABCD involved in spermidine/putrescine import. Responsible for energy coupling to the transport system. This Aggregatibacter actinomycetemcomitans (Actinobacillus actinomycetemcomitans) protein is Spermidine/putrescine import ATP-binding protein PotA.